The chain runs to 278 residues: Maltodextrin transport system permease protein MdxG (278 aa).

Transmembrane regions (helical) follow at residues Ile12–Thr32, Thr74–Tyr94, Leu108–Val128, Met131–Ile151, Ile183–Ala203, and Val242–Phe262. In terms of domain architecture, ABC transmembrane type-1 spans Tyr71 to Leu263.

Belongs to the binding-protein-dependent transport system permease family. MalFG subfamily. As to quaternary structure, the complex is composed of two ATP-binding proteins (MsmX), two transmembrane proteins (MdxF and MdxG) and a solute-binding protein (MdxE).

Its subcellular location is the cell membrane. Part of the ABC transporter complex involved in maltodextrin import. Probably responsible for the translocation of the substrate across the membrane. This is Maltodextrin transport system permease protein MdxG (mdxG) from Bacillus subtilis (strain 168).